Consider the following 302-residue polypeptide: Quinolinate synthase (302 aa).

Iminosuccinate contacts are provided by His24 and Ser41. Residue Cys86 coordinates [4Fe-4S] cluster. Iminosuccinate contacts are provided by residues 112–114 and Ser129; that span reads YVN. Cys171 is a [4Fe-4S] cluster binding site. Residues 197–199 and Thr214 contribute to the iminosuccinate site; that span reads HPE. Cys259 contributes to the [4Fe-4S] cluster binding site.

It belongs to the quinolinate synthase family. Type 2 subfamily. [4Fe-4S] cluster serves as cofactor.

It localises to the cytoplasm. It catalyses the reaction iminosuccinate + dihydroxyacetone phosphate = quinolinate + phosphate + 2 H2O + H(+). It participates in cofactor biosynthesis; NAD(+) biosynthesis; quinolinate from iminoaspartate: step 1/1. Its function is as follows. Catalyzes the condensation of iminoaspartate with dihydroxyacetone phosphate to form quinolinate. The protein is Quinolinate synthase of Dehalococcoides mccartyi (strain CBDB1).